A 368-amino-acid polypeptide reads, in one-letter code: Serine/threonine-protein kinase CAK1 (368 aa).

Residues Met-1–Pro-368 enclose the Protein kinase domain. The active-site Proton acceptor is Asp-156.

It belongs to the protein kinase superfamily. CMGC Ser/Thr protein kinase family. CDC2/CDKX subfamily.

It carries out the reaction L-seryl-[protein] + ATP = O-phospho-L-seryl-[protein] + ADP + H(+). It catalyses the reaction L-threonyl-[protein] + ATP = O-phospho-L-threonyl-[protein] + ADP + H(+). The protein is Serine/threonine-protein kinase CAK1 (CAK1) of Saccharomyces cerevisiae (strain ATCC 204508 / S288c) (Baker's yeast).